A 330-amino-acid polypeptide reads, in one-letter code: 3',5'-cyclic-nucleotide phosphodiesterase (330 aa).

Positions 1 to 22 (MFKNKLAVLFTCLSVFSFSAQS) are cleaved as a signal peptide.

It belongs to the cyclic nucleotide phosphodiesterase class-II family.

Its subcellular location is the periplasm. It carries out the reaction a nucleoside 3',5'-cyclic phosphate + H2O = a nucleoside 5'-phosphate + H(+). Seems to allow the organism to grow on cAMP. The polypeptide is 3',5'-cyclic-nucleotide phosphodiesterase (cpdP) (Aliivibrio fischeri (Vibrio fischeri)).